The sequence spans 293 residues: 3-hydroxybutyryl-CoA dehydrogenase (293 aa).

The protein belongs to the 3-hydroxyacyl-CoA dehydrogenase family.

It catalyses the reaction (3S)-3-hydroxybutanoyl-CoA + NADP(+) = acetoacetyl-CoA + NADPH + H(+). The protein operates within lipid metabolism; butanoate metabolism. This chain is 3-hydroxybutyryl-CoA dehydrogenase (hbdA), found in Bradyrhizobium diazoefficiens (strain JCM 10833 / BCRC 13528 / IAM 13628 / NBRC 14792 / USDA 110).